The following is a 110-amino-acid chain: uncharacterized protein (110 aa).

The signal sequence occupies residues 1–23 (MKRITINIITMFIAAAVISLTGT).

This is an uncharacterized protein from Bacillus subtilis (strain 168).